The following is a 229-amino-acid chain: uncharacterized protein (229 aa).

7 helical membrane-spanning segments follow: residues 1 to 21, 32 to 52, 58 to 78, 100 to 120, 139 to 159, 178 to 198, and 206 to 226; these read MFGT…GGIF, ILMQ…ITQH, YPIL…IINL, TAVL…EAAL, IVLA…LFSW, LINE…LSIL, and LNLL…HAFG.

Its subcellular location is the cell membrane. This is an uncharacterized protein from Bacillus subtilis (strain 168).